The sequence spans 102 residues: Vacuolar ATPase assembly integral membrane protein VMA21 homolog (102 aa).

Topologically, residues 1-33 are cytoplasmic; that stretch reads MTTSSSSEPSTMATLFPNFRDQEVQSAVKNLLT. A helical transmembrane segment spans residues 34–54; it reads YSLVILIVPLASMFLLKQFFF. Over 55–67 the chain is Lumenal; that stretch reads EGLLGVSANDALT. The chain crosses the membrane as a helical span at residues 68-88; the sequence is YSAIIAVVLVHVVLGIWLFAA. Residues 89–102 are Cytoplasmic-facing; sequence TKQEDRKKRENKQD.

Belongs to the VMA21 family.

It is found in the endoplasmic reticulum membrane. The protein resides in the endoplasmic reticulum-Golgi intermediate compartment membrane. It localises to the cytoplasmic vesicle. Its subcellular location is the COPII-coated vesicle membrane. Its function is as follows. Required for the assembly of the V0 complex of the vacuolar ATPase (V-ATPase) in the endoplasmic reticulum. In Caenorhabditis elegans, this protein is Vacuolar ATPase assembly integral membrane protein VMA21 homolog.